The primary structure comprises 142 residues: Conidial pigment biosynthesis dehydratase EthD (142 aa).

In terms of domain architecture, EthD spans 25-121 (PGMSEAAYRE…PDHQKFADTS (97 aa)).

The protein belongs to the tpcK family.

It functions in the pathway pigment biosynthesis. Dehydratase; part of the Pks1 gene cluster that mediates the biosynthesis of an anthraquinone derivative pigment that contributes to conidial pigmentation that provides protection from UV radiation, heat and cold stress. The polyketide synthase Pks1 produces 1-acetyl-2,4,6,8-tetrahydroxy-9,10-anthraquinone though condensation of acetyl-CoA with malonyl-CoA. The dehydratase EthD and the laccase Mlac1 further convert the anthraquinone derivative into the final conidial pigment. This is Conidial pigment biosynthesis dehydratase EthD from Metarhizium robertsii (strain ARSEF 23 / ATCC MYA-3075) (Metarhizium anisopliae (strain ARSEF 23)).